Reading from the N-terminus, the 443-residue chain is 3-phosphoshikimate 1-carboxyvinyltransferase (443 aa).

3-phosphoshikimate is bound by residues lysine 25, serine 26, and arginine 30. Residue lysine 25 participates in phosphoenolpyruvate binding. The phosphoenolpyruvate site is built by glycine 117 and arginine 145. 3-phosphoshikimate is bound by residues serine 188, serine 189, glutamine 190, serine 217, glutamate 331, and histidine 358. Glutamine 190 contributes to the phosphoenolpyruvate binding site. Catalysis depends on glutamate 331, which acts as the Proton acceptor. Arginine 362, arginine 404, and lysine 428 together coordinate phosphoenolpyruvate.

This sequence belongs to the EPSP synthase family. In terms of assembly, monomer.

The protein localises to the cytoplasm. It carries out the reaction 3-phosphoshikimate + phosphoenolpyruvate = 5-O-(1-carboxyvinyl)-3-phosphoshikimate + phosphate. It functions in the pathway metabolic intermediate biosynthesis; chorismate biosynthesis; chorismate from D-erythrose 4-phosphate and phosphoenolpyruvate: step 6/7. Functionally, catalyzes the transfer of the enolpyruvyl moiety of phosphoenolpyruvate (PEP) to the 5-hydroxyl of shikimate-3-phosphate (S3P) to produce enolpyruvyl shikimate-3-phosphate and inorganic phosphate. The protein is 3-phosphoshikimate 1-carboxyvinyltransferase of Tropheryma whipplei (strain TW08/27) (Whipple's bacillus).